We begin with the raw amino-acid sequence, 90 residues long: DNA-binding protein HU-beta (90 aa).

This sequence belongs to the bacterial histone-like protein family. In terms of assembly, heterodimer of an alpha and a beta chain.

Its function is as follows. Histone-like DNA-binding protein which is capable of wrapping DNA to stabilize it, and thus to prevent its denaturation under extreme environmental conditions. The polypeptide is DNA-binding protein HU-beta (hupB) (Salmonella typhi).